A 339-amino-acid polypeptide reads, in one-letter code: Glycerol-3-phosphate dehydrogenase [NAD(P)+] (339 aa).

The NADPH site is built by serine 15, tyrosine 16, histidine 36, and lysine 110. Residues lysine 110, glycine 139, and threonine 141 each coordinate sn-glycerol 3-phosphate. Alanine 143 provides a ligand contact to NADPH. Lysine 195, aspartate 248, serine 258, arginine 259, and asparagine 260 together coordinate sn-glycerol 3-phosphate. The active-site Proton acceptor is lysine 195. Arginine 259 is an NADPH binding site. NADPH contacts are provided by valine 283 and glutamate 285.

This sequence belongs to the NAD-dependent glycerol-3-phosphate dehydrogenase family.

It is found in the cytoplasm. It catalyses the reaction sn-glycerol 3-phosphate + NAD(+) = dihydroxyacetone phosphate + NADH + H(+). The catalysed reaction is sn-glycerol 3-phosphate + NADP(+) = dihydroxyacetone phosphate + NADPH + H(+). It participates in membrane lipid metabolism; glycerophospholipid metabolism. Functionally, catalyzes the reduction of the glycolytic intermediate dihydroxyacetone phosphate (DHAP) to sn-glycerol 3-phosphate (G3P), the key precursor for phospholipid synthesis. In Klebsiella pneumoniae subsp. pneumoniae (strain ATCC 700721 / MGH 78578), this protein is Glycerol-3-phosphate dehydrogenase [NAD(P)+].